We begin with the raw amino-acid sequence, 704 residues long: Polyribonucleotide nucleotidyltransferase (704 aa).

Residues aspartate 490 and aspartate 496 each contribute to the Mg(2+) site. One can recognise a KH domain in the interval 557–616 (PKIEMIQIKPAKIKDVIGKGGETINSIIDETGVKIDIDQDGNVSIASSDAEMIKKAIKII). The S1 motif domain occupies 626 to 694 (GQVYLAKVVR…KQGRVNVSRK (69 aa)).

This sequence belongs to the polyribonucleotide nucleotidyltransferase family. The cofactor is Mg(2+).

Its subcellular location is the cytoplasm. It carries out the reaction RNA(n+1) + phosphate = RNA(n) + a ribonucleoside 5'-diphosphate. In terms of biological role, involved in mRNA degradation. Catalyzes the phosphorolysis of single-stranded polyribonucleotides processively in the 3'- to 5'-direction. This is Polyribonucleotide nucleotidyltransferase from Enterococcus faecalis (strain ATCC 700802 / V583).